A 306-amino-acid chain; its full sequence is Ornithine carbamoyltransferase (306 aa).

Carbamoyl phosphate is bound by residues 46 to 49 (STRT), Q73, R97, and 124 to 127 (HPTQ). Residues N156, D220, and 224-225 (SM) each bind L-ornithine. Carbamoyl phosphate is bound by residues 260 to 261 (CL) and R288.

It belongs to the aspartate/ornithine carbamoyltransferase superfamily. OTCase family.

It localises to the cytoplasm. The enzyme catalyses carbamoyl phosphate + L-ornithine = L-citrulline + phosphate + H(+). Its pathway is amino-acid biosynthesis; L-arginine biosynthesis; L-arginine from L-ornithine and carbamoyl phosphate: step 1/3. In terms of biological role, reversibly catalyzes the transfer of the carbamoyl group from carbamoyl phosphate (CP) to the N(epsilon) atom of ornithine (ORN) to produce L-citrulline. The protein is Ornithine carbamoyltransferase of Campylobacter jejuni subsp. jejuni serotype O:23/36 (strain 81-176).